Here is a 710-residue protein sequence, read N- to C-terminus: Methionine--tRNA ligase (710 aa).

A 'HIGH' region motif is present at residues 16–26 (PYANGAFHIGH). Cys147, Cys150, Cys160, and Cys163 together coordinate Zn(2+). A 'KMSKS' region motif is present at residues 350-354 (KMSKS). Position 353 (Lys353) interacts with ATP. One can recognise a tRNA-binding domain in the interval 604–710 (DFAKIDLRIA…PGAEPGMRVG (107 aa)).

It belongs to the class-I aminoacyl-tRNA synthetase family. MetG type 1 subfamily. In terms of assembly, homodimer. It depends on Zn(2+) as a cofactor.

It is found in the cytoplasm. The catalysed reaction is tRNA(Met) + L-methionine + ATP = L-methionyl-tRNA(Met) + AMP + diphosphate. In terms of biological role, is required not only for elongation of protein synthesis but also for the initiation of all mRNA translation through initiator tRNA(fMet) aminoacylation. This chain is Methionine--tRNA ligase, found in Herminiimonas arsenicoxydans.